A 326-amino-acid polypeptide reads, in one-letter code: Microtubule-associated protein RP/EB family member 2 (326 aa).

Ser-9 is modified (phosphoserine). Residues 56 to 158 form the Calponin-homology (CH) domain; that stretch reads TMSRHDIIAW…FIQWFKKFYD (103 aa). A Phosphotyrosine modification is found at Tyr-166. 2 disordered regions span residues 170–239 and 297–326; these read EARQ…DKDL and YASD…QEEY. Residues 186 to 326 form a DCTN1-binding region; the sequence is QIFNLPKKSH…DQQPQQQEEY (141 aa). Residues 199 to 233 show a composition bias toward low complexity; sequence SPTAGAAKSSPASKPGSTPSRPSSAKRASSSGSAS. A phosphoserine mark is found at Ser-218 and Ser-235. One can recognise an EB1 C-terminal domain in the interval 235–305; the sequence is SDKDLETQVI…LYASDEQEGQ (71 aa). The interval 258–301 is APC-binding; that stretch reads EGVEKERDFYFGKLREIELLCQEHGQENDDLVQRLMEVLYASDE. Over residues 300–312 the composition is skewed to acidic residues; sequence DEQEGQTEEPEAE. A compositionally biased stretch (low complexity) spans 317–326; it reads DQQPQQQEEY.

Belongs to the MAPRE family. In terms of assembly, interacts with DCTN1. Interacts with APC (via C-terminal). Interacts with monomeric and polymerized tubulin. Interacts with SLAIN1. Interacts (via the N-terminal region) with BAG1. Interacts with ASB14. In terms of processing, ubiquitinated in an ASB14-dependent manner; leading to proteasomal degradation. Phosphorylated at Ser-235 by CK2 leading to enhanced cell adhesion. Phosphorylated by CDK1 and AURKB during mitosis reduces the binding affinity of MAPRE2 for microtubules. Expressed during early stages of apico-basal epithelial differentiation but down-regulated in most cells at later stages.

The protein resides in the cytoplasm. Its subcellular location is the cytoskeleton. The protein localises to the spindle. Functionally, adapter protein that is involved in microtubule polymerization, and spindle function by stabilizing microtubules and anchoring them at centrosomes. Therefore, ensures mitotic progression and genome stability. Acts as a central regulator of microtubule reorganization in apico-basal epithelial differentiation. Plays a role during oocyte meiosis by regulating microtubule dynamics. Participates in neurite growth by interacting with plexin B3/PLXNB3 and microtubule reorganization during apico-basal epithelial differentiation. Plays also an essential role for cell migration and focal adhesion dynamics. Mechanistically, recruits HAX1 to microtubules in order to regulate focal adhesion dynamics. The polypeptide is Microtubule-associated protein RP/EB family member 2 (Mapre2) (Mus musculus (Mouse)).